Reading from the N-terminus, the 346-residue chain is FAS-associated factor 2 (346 aa).

At Lys-68 the chain carries N6-acetyllysine. The stretch at 176–251 (SERLEREERN…EEKERKLECL (76 aa)) forms a coiled coil. Positions 200–262 (ASLRADQEKE…PEPSPDDPDS (63 aa)) are disordered. The span at 204-249 (ADQEKERKKREERERKRRKEEEVQQQKLAEERRRQNLQEEKERKLE) shows a compositional bias: basic and acidic residues. Residues 258-340 (DDPDSVKIIF…GLSHTEVLFV (83 aa)) form the UBX domain.

As to quaternary structure, identified in a complex that contains SEL1L, OS9, FAF2/UBXD8, UBE2J1/UBC6E and AUP1. Interacts with YOD1. Interacts (via N-terminus) with UBQLN2 (via C-terminus). Interacts with PNPLA2 and UBAC2. Interacts with ZFAND2B; probably through VCP. Interacts with LMBR1L.

It localises to the cytoplasm. It is found in the lipid droplet. Its subcellular location is the endoplasmic reticulum. Functionally, plays an important role in endoplasmic reticulum-associated degradation (ERAD) that mediates ubiquitin-dependent degradation of misfolded endoplasmic reticulum proteins. By controlling the steady-state expression of the IGF1R receptor, indirectly regulates the insulin-like growth factor receptor signaling pathway. Involved in inhibition of lipid droplet degradation by binding to phospholipase PNPL2 and inhibiting its activity by promoting dissociation of PNPL2 from its endogenous activator, ABHD5 which inhibits the rate of triacylglycerol hydrolysis. Involved in stress granule disassembly: associates with ubiquitinated G3BP1 in response to heat shock, thereby promoting interaction between ubiquitinated G3BP1 and VCP, followed by G3BP1 extraction from stress granules and stress granule disassembly. This chain is FAS-associated factor 2 (Faf2), found in Rattus norvegicus (Rat).